The following is a 244-amino-acid chain: B3 domain-containing protein At2g36080 (244 aa).

A DNA-binding region (TF-B3) is located at residues 38-144; sequence FEKPLTPSDV…RFFIGWRRRG (107 aa).

The protein localises to the nucleus. The protein is B3 domain-containing protein At2g36080 (ARF31) of Arabidopsis thaliana (Mouse-ear cress).